The following is a 103-amino-acid chain: MKTLLLTLVVVTIICLDLGYTEMCNMCVRPYPFMSSCCPEGQDRCYKSYWVNENGKQEAYHGKYPVILERGCVTACTGPGSGSIYNLYTCCPTNRCGSSSTSG.

The N-terminal stretch at 1 to 21 (MKTLLLTLVVVTIICLDLGYT) is a signal peptide. 5 disulfide bridges follow: cysteine 24–cysteine 45, cysteine 27–cysteine 37, cysteine 38–cysteine 72, cysteine 76–cysteine 90, and cysteine 91–cysteine 96.

Belongs to the three-finger toxin family. Ancestral subfamily. Orphan group XVII sub-subfamily. In terms of tissue distribution, expressed by the venom gland.

It localises to the secreted. In terms of biological role, interacts with high efficiency with both neuronal alpha-7/CHRNA7 and muscle type nicotinic acetylcholine receptors (nAChRs). Tested on human alpha-7/CHRNA7 nAChR (IC(50)=42 nM), T.californica muscle receptor (IC(50)=31 nM), L.stagnalis and A.californica acetylcholine-binding proteins (IC(50)=333 nM and 3.4 uM, respectively). This is Toxin BMLCL from Bungarus multicinctus (Many-banded krait).